The following is a 525-amino-acid chain: GMP synthase [glutamine-hydrolyzing] (525 aa).

Positions 9–207 (RILILDFGSQ…VLDICQCEKL (199 aa)) constitute a Glutamine amidotransferase type-1 domain. The active-site Nucleophile is the Cys-86. Catalysis depends on residues His-181 and Glu-183. The region spanning 208 to 400 (WTPDAIIEDA…LGLPYDMLYR (193 aa)) is the GMPS ATP-PPase domain. An ATP-binding site is contributed by 235–241 (SGGVDSS).

As to quaternary structure, homodimer.

It catalyses the reaction XMP + L-glutamine + ATP + H2O = GMP + L-glutamate + AMP + diphosphate + 2 H(+). Its pathway is purine metabolism; GMP biosynthesis; GMP from XMP (L-Gln route): step 1/1. Functionally, catalyzes the synthesis of GMP from XMP. This chain is GMP synthase [glutamine-hydrolyzing], found in Pseudoalteromonas atlantica (strain T6c / ATCC BAA-1087).